We begin with the raw amino-acid sequence, 217 residues long: 3,4-dihydroxy-2-butanone 4-phosphate synthase (217 aa).

D-ribulose 5-phosphate-binding positions include 37 to 38, Asp42, 150 to 154, and Glu174; these read RE and RRGHT. Glu38 is a Mg(2+) binding site. Mg(2+) is bound at residue His153.

Belongs to the DHBP synthase family. In terms of assembly, homodimer. Mg(2+) serves as cofactor. The cofactor is Mn(2+).

The enzyme catalyses D-ribulose 5-phosphate = (2S)-2-hydroxy-3-oxobutyl phosphate + formate + H(+). Its pathway is cofactor biosynthesis; riboflavin biosynthesis; 2-hydroxy-3-oxobutyl phosphate from D-ribulose 5-phosphate: step 1/1. Catalyzes the conversion of D-ribulose 5-phosphate to formate and 3,4-dihydroxy-2-butanone 4-phosphate. The chain is 3,4-dihydroxy-2-butanone 4-phosphate synthase from Serratia proteamaculans (strain 568).